The chain runs to 93 residues: Integration host factor subunit beta (93 aa).

It belongs to the bacterial histone-like protein family. Heterodimer of an alpha and a beta chain.

This protein is one of the two subunits of integration host factor, a specific DNA-binding protein that functions in genetic recombination as well as in transcriptional and translational control. This is Integration host factor subunit beta (ihfB) from Cereibacter sphaeroides (strain ATCC 17023 / DSM 158 / JCM 6121 / CCUG 31486 / LMG 2827 / NBRC 12203 / NCIMB 8253 / ATH 2.4.1.) (Rhodobacter sphaeroides).